The following is a 136-amino-acid chain: MTKDKKKKDNVRYMDVEFNVSMHCNDCERKIARVISKFKGVETFVTDMINHKVVVRGKIDPNKLLKKLKKKTGKRVKIVVKEEKGEESSKENENVLEIDMESICLGDQSMFGFCDWEMEKFMVFSDENVKAICSIS.

The HMA domain occupies 13-77 (YMDVEFNVSM…LKKKTGKRVK (65 aa)). Residues C24 and C27 each contribute to the a metal cation site. Cysteine methyl ester is present on C133. C133 carries the S-farnesyl cysteine lipid modification. Positions 134 to 136 (SIS) are cleaved as a propeptide — removed in mature form.

It belongs to the HIPP family.

Its function is as follows. Heavy-metal-binding protein. The polypeptide is Heavy metal-associated isoprenylated plant protein 19 (Arabidopsis thaliana (Mouse-ear cress)).